The chain runs to 181 residues: Probable calcium-binding protein CML16 (181 aa).

The tract at residues 1 to 24 is disordered; the sequence is MSNTTEKKMPQQQQVERPTALAPA. EF-hand domains follow at residues 23-58, 63-98, 100-135, and 136-171; these read PADAEIERVFTRFDADGDGRISPSELAAVTRAIAPP, AGGREVAAMMNELDTDRDGFVDLGEFAAFHGRGRGD, EHEAELRAAFDVYDVDGDGRITAAELGKVLGRIGEG, and CSAEECERMIASVDVDGDGCVGFEEFKKMMCRDAAA. D36, D38, D40, R42, E47, D76, D78, D80, E87, D113, D115, D117, R119, E124, D149, D151, D153, C155, and E160 together coordinate Ca(2+).

Potential calcium sensor. This Oryza sativa subsp. japonica (Rice) protein is Probable calcium-binding protein CML16 (CML16).